The sequence spans 394 residues: Elongation factor Tu 2 (394 aa).

The region spanning lysine 10 to glutamate 204 is the tr-type G domain. The tract at residues glycine 19–threonine 26 is G1. Glycine 19–threonine 26 provides a ligand contact to GTP. Threonine 26 contributes to the Mg(2+) binding site. The segment at glycine 60–asparagine 64 is G2. Residues aspartate 81–glycine 84 are G3. GTP is bound by residues aspartate 81–histidine 85 and asparagine 136–aspartate 139. Positions asparagine 136–aspartate 139 are G4. Residues serine 174 to leucine 176 form a G5 region.

The protein belongs to the TRAFAC class translation factor GTPase superfamily. Classic translation factor GTPase family. EF-Tu/EF-1A subfamily. In terms of assembly, monomer.

The protein localises to the cytoplasm. It carries out the reaction GTP + H2O = GDP + phosphate + H(+). Functionally, GTP hydrolase that promotes the GTP-dependent binding of aminoacyl-tRNA to the A-site of ribosomes during protein biosynthesis. This is Elongation factor Tu 2 from Shewanella loihica (strain ATCC BAA-1088 / PV-4).